We begin with the raw amino-acid sequence, 730 residues long: Aspyridones cluster regulator apdR (730 aa).

A DNA-binding region (zn(2)-C6 fungal-type) is located at residues 20–46; sequence CTECRRRKIRCDQATPCRHCEKAALRC.

It localises to the nucleus. In terms of biological role, transcription factor involved in regulation of gene cluster that mediates the biosynthesis of aspyridones. In Emericella nidulans (strain FGSC A4 / ATCC 38163 / CBS 112.46 / NRRL 194 / M139) (Aspergillus nidulans), this protein is Aspyridones cluster regulator apdR.